Here is a 91-residue protein sequence, read N- to C-terminus: RNA-binding protein Hfq (91 aa).

A Sm domain is found at 9–68 (DPFLNALRRERVPVSVYLVNGIKLQGTIESFDQFVVLLRNTVSQMVYKHAISTVVPARNV).

The protein belongs to the Hfq family. As to quaternary structure, homohexamer.

Functionally, RNA chaperone that binds small regulatory RNA (sRNAs) and mRNAs to facilitate mRNA translational regulation in response to envelope stress, environmental stress and changes in metabolite concentrations. Also binds with high specificity to tRNAs. This is RNA-binding protein Hfq from Stenotrophomonas maltophilia (strain K279a).